The following is a 538-amino-acid chain: Atos homolog protein B (538 aa).

A compositionally biased stretch (low complexity) spans 1 to 18 (MRHVQAEPSPSSEPEAGP). Disordered regions lie at residues 1-103 (MRHV…GLLG), 153-185 (NTLH…QLHT), 197-300 (GGKS…VLDP), and 323-342 (SLRK…VPTP). Positions 227 to 238 (HTPPGPGPPGPC) are enriched in pro residues. Ser-254 and Ser-255 each carry phosphoserine. The span at 323–334 (SLRKGPGLLSPP) shows a compositional bias: low complexity. The interval 348 to 430 (LLGSFEESLL…VPKVGTIQVT (83 aa)) is required for macropage invasion. The segment at 436-444 (QTVVKMFLV) is transactivation domain 1 (TAD1).

The protein belongs to the ATOS family.

Its subcellular location is the nucleus. Its function is as follows. Transcription regulator that may syncronize transcriptional and translational programs. The sequence is that of Atos homolog protein B from Pongo abelii (Sumatran orangutan).